The primary structure comprises 555 residues: GPI-anchor transamidase component PIGS (555 aa).

The Cytoplasmic portion of the chain corresponds to 2–18 (ATAGAAATDLEVVRGKR). A cardiolipin is bound by residues arginine 15 and arginine 18. Residues 19-39 (AALFFAAVAILLGLPLWWKTT) form a helical membrane-spanning segment. Residues 40 to 517 (ETYRAPLPYS…LHLLYFPDDQ (478 aa)) are Lumenal-facing. N-linked (GlcNAc...) asparagine glycosylation is found at asparagine 267 and asparagine 370. Residues 518 to 532 (KFAIYIPLFLPMAVP) form a helical membrane-spanning segment. Topologically, residues 533–555 (ILLSLVKIFLETHKSWKKPEKID) are cytoplasmic.

This sequence belongs to the PIGS family. Heteropentamer. Part of the GPI-anchor transamidase complex, consisting of PIGK, PIGT, PIGS, PIGU and GAA1.

The protein localises to the endoplasmic reticulum membrane. It functions in the pathway glycolipid biosynthesis; glycosylphosphatidylinositol-anchor biosynthesis. Its function is as follows. Component of the glycosylphosphatidylinositol-anchor (GPI-anchor) transamidase (GPI-T) complex that catalyzes the formation of the linkage between a proprotein and a GPI-anchor and participates in GPI anchored protein biosynthesis. This Rattus norvegicus (Rat) protein is GPI-anchor transamidase component PIGS.